Here is an 83-residue protein sequence, read N- to C-terminus: Large ribosomal subunit protein bL27 (83 aa).

Residues 1-21 (MAHKRSSGAGRNGRDSNPKYL) are disordered.

It belongs to the bacterial ribosomal protein bL27 family.

This chain is Large ribosomal subunit protein bL27, found in Kosmotoga olearia (strain ATCC BAA-1733 / DSM 21960 / TBF 19.5.1).